Reading from the N-terminus, the 417-residue chain is DNA primase DnaG (417 aa).

The Toprim domain maps to 171–257; the sequence is DAIIIVEGRA…SVEDMARKEI (87 aa). Mg(2+) contacts are provided by glutamate 177, aspartate 219, and aspartate 221. Positions 278-325 are disordered; that stretch reads VPGEKRTQDLRPQKPGASEQNSIKKENVENENESTPTSFEPISEPAPP. A compositionally biased stretch (basic and acidic residues) spans 279-289; the sequence is PGEKRTQDLRP.

This sequence belongs to the archaeal DnaG primase family. As to quaternary structure, forms a ternary complex with MCM helicase and DNA. Mg(2+) is required as a cofactor.

The enzyme catalyses ssDNA + n NTP = ssDNA/pppN(pN)n-1 hybrid + (n-1) diphosphate.. Its function is as follows. RNA polymerase that catalyzes the synthesis of short RNA molecules used as primers for DNA polymerase during DNA replication. The polypeptide is DNA primase DnaG (Methanosphaerula palustris (strain ATCC BAA-1556 / DSM 19958 / E1-9c)).